The following is a 283-amino-acid chain: Movement protein (283 aa).

Belongs to the tenuiviruses pc4 protein family.

Its function is as follows. Transports viral genome to neighboring plant cells directly through plasmosdesmata, without any budding. The movement protein allows efficient cell to cell propagation, by bypassing the host cell wall barrier. In Maize stripe virus (MStV), this protein is Movement protein.